The chain runs to 154 residues: Transcription antitermination protein NusB (154 aa).

It belongs to the NusB family.

Functionally, involved in transcription antitermination. Required for transcription of ribosomal RNA (rRNA) genes. Binds specifically to the boxA antiterminator sequence of the ribosomal RNA (rrn) operons. In Desulfosudis oleivorans (strain DSM 6200 / JCM 39069 / Hxd3) (Desulfococcus oleovorans), this protein is Transcription antitermination protein NusB.